A 237-amino-acid chain; its full sequence is Protein lin-31 (237 aa).

Residues 12-103 (QKPPYSYIWL…SGMFENGSCL (92 aa)) constitute a DNA-binding region (fork-head). Disordered stretches follow at residues 110–141 (RARG…LLPE) and 195–237 (NFES…ILSS). 2 stretches are compositionally biased toward low complexity: residues 206–216 (SEISGSGSSSS) and 227–237 (SSFSIESILSS).

The protein localises to the nucleus. Lin-31 regulates how vulval precursor cells choose their fate. It helps specify three alternative cell fates in vulval development. The polypeptide is Protein lin-31 (lin-31) (Caenorhabditis elegans).